The following is a 156-amino-acid chain: Small ribosomal subunit protein uS7 (156 aa).

The protein belongs to the universal ribosomal protein uS7 family. Part of the 30S ribosomal subunit. Contacts proteins S9 and S11.

Functionally, one of the primary rRNA binding proteins, it binds directly to 16S rRNA where it nucleates assembly of the head domain of the 30S subunit. Is located at the subunit interface close to the decoding center, probably blocks exit of the E-site tRNA. This chain is Small ribosomal subunit protein uS7, found in Rhodococcus erythropolis (strain PR4 / NBRC 100887).